The primary structure comprises 246 residues: Pyridoxine 5'-phosphate synthase (246 aa).

Asn-6 is a binding site for 3-amino-2-oxopropyl phosphate. 8–9 provides a ligand contact to 1-deoxy-D-xylulose 5-phosphate; that stretch reads DH. Arg-17 serves as a coordination point for 3-amino-2-oxopropyl phosphate. Catalysis depends on His-49, which acts as the Proton acceptor. Arg-51 and His-56 together coordinate 1-deoxy-D-xylulose 5-phosphate. The active-site Proton acceptor is the Glu-76. Thr-106 contributes to the 1-deoxy-D-xylulose 5-phosphate binding site. Catalysis depends on His-196, which acts as the Proton donor. 3-amino-2-oxopropyl phosphate is bound by residues Gly-197 and 219-220; that span reads GH.

It belongs to the PNP synthase family. Homooctamer; tetramer of dimers.

It localises to the cytoplasm. It carries out the reaction 3-amino-2-oxopropyl phosphate + 1-deoxy-D-xylulose 5-phosphate = pyridoxine 5'-phosphate + phosphate + 2 H2O + H(+). It functions in the pathway cofactor biosynthesis; pyridoxine 5'-phosphate biosynthesis; pyridoxine 5'-phosphate from D-erythrose 4-phosphate: step 5/5. Functionally, catalyzes the complicated ring closure reaction between the two acyclic compounds 1-deoxy-D-xylulose-5-phosphate (DXP) and 3-amino-2-oxopropyl phosphate (1-amino-acetone-3-phosphate or AAP) to form pyridoxine 5'-phosphate (PNP) and inorganic phosphate. The chain is Pyridoxine 5'-phosphate synthase from Akkermansia muciniphila (strain ATCC BAA-835 / DSM 22959 / JCM 33894 / BCRC 81048 / CCUG 64013 / CIP 107961 / Muc).